A 214-amino-acid chain; its full sequence is Chalcone isomerase-like protein 1 (214 aa).

Belongs to the chalcone isomerase family. Mostly expressed in glandular trichomes (lupulin glands), and, to a lower extent, in cones, cones bracts, leaves, stems and roots.

The protein resides in the cytoplasm. It carries out the reaction a chalcone = a flavanone.. It participates in secondary metabolite biosynthesis; flavonoid biosynthesis. Its function is as follows. Involved in the biosynthesis of prenylated phenolics natural products which contribute to the bitter taste of beer and display broad biological activities. Involved in anthocyanin biosynthesis. Polyketide binding proteins (PBP) which reduces the catalytic activities of CHS_H1 and PT1L and prevents demethylxanthohumol (DMX) production, by binding to DMX and naringenin chalcone (NC) to stabilize the chalconoids ring-opened structure. This chain is Chalcone isomerase-like protein 1, found in Humulus lupulus (European hop).